The following is a 102-amino-acid chain: Large ribosomal subunit protein uL24 (102 aa).

Belongs to the universal ribosomal protein uL24 family. In terms of assembly, part of the 50S ribosomal subunit.

Its function is as follows. One of two assembly initiator proteins, it binds directly to the 5'-end of the 23S rRNA, where it nucleates assembly of the 50S subunit. One of the proteins that surrounds the polypeptide exit tunnel on the outside of the subunit. The chain is Large ribosomal subunit protein uL24 from Ralstonia pickettii (strain 12J).